We begin with the raw amino-acid sequence, 279 residues long: Thymidylate synthase (279 aa).

133 to 134 (RR) serves as a coordination point for dUMP. Cys154 functions as the Nucleophile in the catalytic mechanism. Residues 178–181 (RSND), Asn189, and 219–221 (HIY) each bind dUMP. Position 181 (Asp181) interacts with (6R)-5,10-methylene-5,6,7,8-tetrahydrofolate. Ala278 is a binding site for (6R)-5,10-methylene-5,6,7,8-tetrahydrofolate.

It belongs to the thymidylate synthase family. Bacterial-type ThyA subfamily. In terms of assembly, homodimer.

The protein resides in the cytoplasm. The enzyme catalyses dUMP + (6R)-5,10-methylene-5,6,7,8-tetrahydrofolate = 7,8-dihydrofolate + dTMP. It participates in pyrimidine metabolism; dTTP biosynthesis. In terms of biological role, catalyzes the reductive methylation of 2'-deoxyuridine-5'-monophosphate (dUMP) to 2'-deoxythymidine-5'-monophosphate (dTMP) while utilizing 5,10-methylenetetrahydrofolate (mTHF) as the methyl donor and reductant in the reaction, yielding dihydrofolate (DHF) as a by-product. This enzymatic reaction provides an intracellular de novo source of dTMP, an essential precursor for DNA biosynthesis. This Streptococcus mutans serotype c (strain ATCC 700610 / UA159) protein is Thymidylate synthase.